A 190-amino-acid chain; its full sequence is GTP cyclohydrolase 1 (190 aa).

Zn(2+)-binding residues include C80, H83, and C151.

The protein belongs to the GTP cyclohydrolase I family. In terms of assembly, toroid-shaped homodecamer, composed of two pentamers of five dimers.

It carries out the reaction GTP + H2O = 7,8-dihydroneopterin 3'-triphosphate + formate + H(+). It participates in cofactor biosynthesis; 7,8-dihydroneopterin triphosphate biosynthesis; 7,8-dihydroneopterin triphosphate from GTP: step 1/1. This is GTP cyclohydrolase 1 from Rickettsia felis (strain ATCC VR-1525 / URRWXCal2) (Rickettsia azadi).